The chain runs to 214 residues: Adenylate kinase (214 aa).

Residue 10–15 (GAGKGT) coordinates ATP. The interval 30 to 59 (STGDMLRAAIKAGTELGKQAKSVIDAGQLV) is NMP. Residues Thr-31, Arg-36, 57 to 59 (QLV), 85 to 88 (GFPR), and Gln-92 each bind AMP. The interval 122–159 (GRRAHLPSGRTYHVVYNPPKEEGKDDETGEPLVIREDD) is LID. Residues Arg-123 and 132–133 (TY) each bind ATP. Residues Arg-156 and Arg-167 each coordinate AMP. ATP is bound at residue Lys-200.

This sequence belongs to the adenylate kinase family. As to quaternary structure, monomer.

It is found in the cytoplasm. The enzyme catalyses AMP + ATP = 2 ADP. The protein operates within purine metabolism; AMP biosynthesis via salvage pathway; AMP from ADP: step 1/1. Its function is as follows. Catalyzes the reversible transfer of the terminal phosphate group between ATP and AMP. Plays an important role in cellular energy homeostasis and in adenine nucleotide metabolism. This is Adenylate kinase from Aliivibrio fischeri (strain ATCC 700601 / ES114) (Vibrio fischeri).